A 170-amino-acid chain; its full sequence is Crossover junction endodeoxyribonuclease RuvC (170 aa).

Catalysis depends on residues Asp-11, Glu-71, and Asp-143. Asp-11, Glu-71, and Asp-143 together coordinate Mg(2+).

It belongs to the RuvC family. As to quaternary structure, homodimer which binds Holliday junction (HJ) DNA. The HJ becomes 2-fold symmetrical on binding to RuvC with unstacked arms; it has a different conformation from HJ DNA in complex with RuvA. In the full resolvosome a probable DNA-RuvA(4)-RuvB(12)-RuvC(2) complex forms which resolves the HJ. Requires Mg(2+) as cofactor.

Its subcellular location is the cytoplasm. It carries out the reaction Endonucleolytic cleavage at a junction such as a reciprocal single-stranded crossover between two homologous DNA duplexes (Holliday junction).. In terms of biological role, the RuvA-RuvB-RuvC complex processes Holliday junction (HJ) DNA during genetic recombination and DNA repair. Endonuclease that resolves HJ intermediates. Cleaves cruciform DNA by making single-stranded nicks across the HJ at symmetrical positions within the homologous arms, yielding a 5'-phosphate and a 3'-hydroxyl group; requires a central core of homology in the junction. The consensus cleavage sequence is 5'-(A/T)TT(C/G)-3'. Cleavage occurs on the 3'-side of the TT dinucleotide at the point of strand exchange. HJ branch migration catalyzed by RuvA-RuvB allows RuvC to scan DNA until it finds its consensus sequence, where it cleaves and resolves the cruciform DNA. The chain is Crossover junction endodeoxyribonuclease RuvC from Rhizobium meliloti (strain 1021) (Ensifer meliloti).